A 374-amino-acid chain; its full sequence is O-methyltransferase acrG (374 aa).

The S-adenosyl-L-homocysteine site is built by Y19, N70, D96, S128, and F129. F245 is a binding site for Mg(2+).

This sequence belongs to the methyltransferase superfamily. Type-7 methyltransferase family.

It participates in secondary metabolite biosynthesis. Functionally, O-methyltransferase; part of the cluster that mediates the biosynthesis of acurin A, a highly reduced polyketide coupled to a serine via a peptide bond. The activities of the highly reducing polyketide synthase acrA and the nonribosomal peptide synthetase acrB are collectively responsible for the synthesis of the acurin A core structure with a heptaketide backbone produced by acrA covalently fused to a L-serine by acrB. After the formation of the PK-NRP hybrid product, it is detached from acrB by reductive release to set up the formation of the lactam ring by aldol condensation. The hydrolyase acrC then catalyzes water loss to generate a double bond in the ring. This double bond is probably reduced, which is followed by three oxidations at C-22 to generate the carboxylic acid moiety, involving probably the FAD-binding monooxygenase acrE and the cytochrome P450 monooxygenases acrD and acrF. Finally, a last methylation step performed by the O-methyltransferase acrG leads to the production of acurin A. The sequence is that of O-methyltransferase acrG from Aspergillus aculeatus (strain ATCC 16872 / CBS 172.66 / WB 5094).